The sequence spans 319 residues: NADH-cytochrome b5 reductase 2 (319 aa).

Residues 30–46 (LAPVYLTVGLAGLGVGL) form a helical membrane-spanning segment. Residues 69–173 (QGWVDLKLSE…KGPLPKYPWE (105 aa)) enclose the FAD-binding FR-type domain. 176–211 (KHQHICLIAGGTGITPMYQLARHIFKNPEDKTKVTL) contacts FAD.

This sequence belongs to the flavoprotein pyridine nucleotide cytochrome reductase family. FAD serves as cofactor.

Its subcellular location is the mitochondrion outer membrane. The enzyme catalyses 2 Fe(III)-[cytochrome b5] + NADH = 2 Fe(II)-[cytochrome b5] + NAD(+) + H(+). Functionally, may mediate the reduction of outer membrane cytochrome b5. This Aspergillus terreus (strain NIH 2624 / FGSC A1156) protein is NADH-cytochrome b5 reductase 2 (mcr1).